A 113-amino-acid polypeptide reads, in one-letter code: Ribonuclease P protein component (113 aa).

This sequence belongs to the RnpA family. As to quaternary structure, consists of a catalytic RNA component (M1 or rnpB) and a protein subunit.

It carries out the reaction Endonucleolytic cleavage of RNA, removing 5'-extranucleotides from tRNA precursor.. Its function is as follows. RNaseP catalyzes the removal of the 5'-leader sequence from pre-tRNA to produce the mature 5'-terminus. It can also cleave other RNA substrates such as 4.5S RNA. The protein component plays an auxiliary but essential role in vivo by binding to the 5'-leader sequence and broadening the substrate specificity of the ribozyme. In Clavibacter michiganensis subsp. michiganensis (strain NCPPB 382), this protein is Ribonuclease P protein component.